The chain runs to 464 residues: Cyclin-dependent kinase 8 (464 aa).

The interaction with CCNC stretch occupies residues 1–15 (MDYDFKVKLSSERER). Residues 21 to 335 (EYEGCKVGRG…SEQAMQDPYF (315 aa)) form the Protein kinase domain. Residues 27-35 (VGRGTYGHV) and Lys-52 each bind ATP. Residue Asp-151 is the Proton acceptor of the active site. Positions 358–464 (FLTEEEPDEK…PQYSHQTHRY (107 aa)) are disordered. Residues 373–391 (QQQQQGNNHTNGTGHPGNQ) are compositionally biased toward low complexity. Composition is skewed to polar residues over residues 409–426 (PTTTSGGLIMTSDYQRSN) and 436–464 (PSTSQPQSSMGYSATSQQPPQYSHQTHRY).

It belongs to the protein kinase superfamily. CMGC Ser/Thr protein kinase family. CDC2/CDKX subfamily. Component of the Mediator complex, which is composed of MED1, MED4, MED6, MED7, MED8, MED9, MED10, MED11, MED12, MED13, MED13L, MED14, MED15, MED16, MED17, MED18, MED19, MED20, MED21, MED22, MED23, MED24, MED25, MED26, MED27, MED29, MED30, MED31, CCNC, CDK8 and CDC2L6/CDK11. The MED12, MED13, CCNC and CDK8 subunits form a distinct module termed the CDK8 module. Mediator containing the CDK8 module is less active than Mediator lacking this module in supporting transcriptional activation. Individual preparations of the Mediator complex lacking one or more distinct subunits have been variously termed ARC, CRSP, DRIP, PC2, SMCC and TRAP. The cylin/CDK pair formed by CCNC/CDK8 also associates with the large subunit of RNA polymerase II. Interacts with CTNNB1, GLI3 and MAML1. It depends on Mg(2+) as a cofactor.

It is found in the nucleus. The catalysed reaction is L-seryl-[protein] + ATP = O-phospho-L-seryl-[protein] + ADP + H(+). It carries out the reaction L-threonyl-[protein] + ATP = O-phospho-L-threonyl-[protein] + ADP + H(+). The enzyme catalyses [DNA-directed RNA polymerase] + ATP = phospho-[DNA-directed RNA polymerase] + ADP + H(+). Component of the Mediator complex, a coactivator involved in regulated gene transcription of nearly all RNA polymerase II-dependent genes. Mediator functions as a bridge to convey information from gene-specific regulatory proteins to the basal RNA polymerase II transcription machinery. Mediator is recruited to promoters by direct interactions with regulatory proteins and serves as a scaffold for the assembly of a functional pre-initiation complex with RNA polymerase II and the general transcription factors. Phosphorylates the CTD (C-terminal domain) of the large subunit of RNA polymerase II (RNAp II), which may inhibit the formation of a transcription initiation complex. Phosphorylates CCNH leading to down-regulation of the TFIIH complex and transcriptional repression. Recruited through interaction with MAML1 to hyperphosphorylate the intracellular domain of NOTCH, leading to its degradation. The polypeptide is Cyclin-dependent kinase 8 (Cdk8) (Mus musculus (Mouse)).